A 351-amino-acid polypeptide reads, in one-letter code: Thiamine-phosphate synthase (351 aa).

A unknown region spans residues 1–129 (MVEPYSQKEQ…AKACKQMRYQ (129 aa)). Positions 65–85 (LRAARDTPGDPGTELTHPQEE) are disordered. The interval 130-351 (VYTLESNLMG…SQLNRIKPEL (222 aa)) is thiamine-phosphate synthase. 4-amino-2-methyl-5-(diphosphooxymethyl)pyrimidine-binding positions include 177 to 181 (QYRDK) and Asn209. Mg(2+) contacts are provided by Asp210 and Asp229. Ser248 provides a ligand contact to 4-amino-2-methyl-5-(diphosphooxymethyl)pyrimidine. 2-[(2R,5Z)-2-carboxy-4-methylthiazol-5(2H)-ylidene]ethyl phosphate is bound at residue 274 to 276 (TPT). Lys277 contributes to the 4-amino-2-methyl-5-(diphosphooxymethyl)pyrimidine binding site. Position 304 (Gly304) interacts with 2-[(2R,5Z)-2-carboxy-4-methylthiazol-5(2H)-ylidene]ethyl phosphate.

This sequence belongs to the thiamine-phosphate synthase family. It depends on Mg(2+) as a cofactor.

It catalyses the reaction 2-[(2R,5Z)-2-carboxy-4-methylthiazol-5(2H)-ylidene]ethyl phosphate + 4-amino-2-methyl-5-(diphosphooxymethyl)pyrimidine + 2 H(+) = thiamine phosphate + CO2 + diphosphate. The enzyme catalyses 2-(2-carboxy-4-methylthiazol-5-yl)ethyl phosphate + 4-amino-2-methyl-5-(diphosphooxymethyl)pyrimidine + 2 H(+) = thiamine phosphate + CO2 + diphosphate. It carries out the reaction 4-methyl-5-(2-phosphooxyethyl)-thiazole + 4-amino-2-methyl-5-(diphosphooxymethyl)pyrimidine + H(+) = thiamine phosphate + diphosphate. It participates in cofactor biosynthesis; thiamine diphosphate biosynthesis; thiamine phosphate from 4-amino-2-methyl-5-diphosphomethylpyrimidine and 4-methyl-5-(2-phosphoethyl)-thiazole: step 1/1. Its function is as follows. Condenses 4-methyl-5-(beta-hydroxyethyl)thiazole monophosphate (THZ-P) and 2-methyl-4-amino-5-hydroxymethyl pyrimidine pyrophosphate (HMP-PP) to form thiamine monophosphate (TMP). The polypeptide is Thiamine-phosphate synthase (Nostoc punctiforme (strain ATCC 29133 / PCC 73102)).